A 156-amino-acid chain; its full sequence is MPRRRVIGQRKILPDPKFKSELLAKFVNILMVDGKKSTAEKIVYTALEVMAEKSGKDHLAVFEEALENVRPAVEVKSRRVGGSTYQVPVEVRPVRRNALAMRWVVEAARKRGEKSMAQRLAAEMLDASENKGTSVKKREDVHRMADANKAFAHYRW.

The protein belongs to the universal ribosomal protein uS7 family. Part of the 30S ribosomal subunit. Contacts proteins S9 and S11.

One of the primary rRNA binding proteins, it binds directly to 16S rRNA where it nucleates assembly of the head domain of the 30S subunit. Is located at the subunit interface close to the decoding center, probably blocks exit of the E-site tRNA. The chain is Small ribosomal subunit protein uS7 from Vibrio atlanticus (strain LGP32) (Vibrio splendidus (strain Mel32)).